The sequence spans 420 residues: MKLFVHLVLFISLFIPYFTKAALYVDIKKSSVGNIGLVVSKCTCKTALESELSENIAKVIGTNLSNCGLFNVKRSAEAESKSWKSDTVVTVSLSEISGSALELSFRLFDAFTKRELLTQSVVFPAKDWRKIGHLVSDVIHDRLIGEKGHFNTKITYIAEEKDSNYKSVRKIAVMNQDGSNIKYLTNGDRFVSTPRFSPNGKGIVYISYANGKSYIILKNLKDNTESIISAFEGVVSAPRFSPDGKSLLISHSLGGETNILSLDLSSKRTKKITKGSAISTSPSFSPDQKYMAFSSDISGSQQLYVIDFTNKSKKPKRISFGSGRYATPVWSPKGDLIAFTKIQSGKFYIGVMKPDGKEERLLSEGHKIESPAWLPNGREIIFTRTESPSNSKLYLVDLVKKNQKMVSTPTNASLPDWSYF.

An N-terminal signal peptide occupies residues 1–21 (MKLFVHLVLFISLFIPYFTKA).

The protein belongs to the TolB family. The Tol-Pal system is composed of five core proteins: the inner membrane proteins TolA, TolQ and TolR, the periplasmic protein TolB and the outer membrane protein Pal. They form a network linking the inner and outer membranes and the peptidoglycan layer.

The protein resides in the periplasm. In terms of biological role, part of the Tol-Pal system, which plays a role in outer membrane invagination during cell division and is important for maintaining outer membrane integrity. The chain is Tol-Pal system protein TolB from Wolbachia pipientis wMel.